We begin with the raw amino-acid sequence, 364 residues long: Probable UDP-arabinopyranose mutase 1 (364 aa).

Positions 110–112 (DDD) match the DXD motif motif. A glycan (N-linked (Glc...) arginine) is linked at Arg-158.

Belongs to the RGP family. Homopentamer or homohexamer. It depends on Mn(2+) as a cofactor. Mg(2+) is required as a cofactor. Post-translationally, reversibly glycosylated by UDP-glucose, UDP-xylose and UDP-galactose.

Its subcellular location is the secreted. The protein localises to the cell wall. The protein resides in the cell junction. It is found in the plasmodesma. It localises to the golgi apparatus. The enzyme catalyses UDP-beta-L-arabinofuranose = UDP-beta-L-arabinopyranose. Its function is as follows. Probable UDP-L-arabinose mutase involved in the biosynthesis of cell wall non-cellulosic polysaccharides. Was initially shown to possess an autoglycosylating activity which is dependent on the presence of UDP-glucose and manganese. The sequence is that of Probable UDP-arabinopyranose mutase 1 from Zea mays (Maize).